Reading from the N-terminus, the 237-residue chain is Ubiquinone biosynthesis O-methyltransferase (237 aa).

The S-adenosyl-L-methionine site is built by Arg-38, Gly-58, Asp-79, and Met-124.

The protein belongs to the methyltransferase superfamily. UbiG/COQ3 family.

It carries out the reaction a 3-demethylubiquinol + S-adenosyl-L-methionine = a ubiquinol + S-adenosyl-L-homocysteine + H(+). It catalyses the reaction a 3-(all-trans-polyprenyl)benzene-1,2-diol + S-adenosyl-L-methionine = a 2-methoxy-6-(all-trans-polyprenyl)phenol + S-adenosyl-L-homocysteine + H(+). Its pathway is cofactor biosynthesis; ubiquinone biosynthesis. In terms of biological role, O-methyltransferase that catalyzes the 2 O-methylation steps in the ubiquinone biosynthetic pathway. The sequence is that of Ubiquinone biosynthesis O-methyltransferase from Acinetobacter baumannii (strain AB307-0294).